Consider the following 1035-residue polypeptide: Kinesin-like protein KIN-4A (1035 aa).

One can recognise a Kinesin motor domain in the interval 11 to 370 (SVKVAVHIRP…LKYANRARNI (360 aa)). ATP is bound at residue 90–97 (GQTGSGKT). 3 coiled-coil regions span residues 408–436 (CAEV…HEYR), 504–707 (QNSM…RKSS), and 881–911 (KEIV…IATS). Residues 704 to 724 (RKSSPREHSAGTNGFGTNGQT) are disordered.

It belongs to the TRAFAC class myosin-kinesin ATPase superfamily. Kinesin family. KIN-4 subfamily. In terms of assembly, homodimer. In terms of tissue distribution, expressed in stems and flowers. Detected in cells undergoing secondary wall deposition including developing interfascicular fibers and xylem cells, but also in dividing cells and expanding/elongating parenchyma cells.

The protein resides in the cytoplasm. It is found in the cytoskeleton. Its function is as follows. Kinesin-like motor protein involved in the control of the oriented deposition of cellulose microfibrils. Its motor activity is directed toward the microtubule's plus end. It possesses the potential to drive long-distance transport of cargo along cortical microtubules. Regulates cell wall mechanics during cell elongation, by the regulation of primary and secondary walls deposition. Contributes to cortical microtubule-mediated trafficking of cell wall components. In Arabidopsis thaliana (Mouse-ear cress), this protein is Kinesin-like protein KIN-4A.